The primary structure comprises 398 residues: Type III polyketide synthase pspB (398 aa).

Residues lysine 47 and 47 to 54 each bind CoA; that span reads KLLQINRS. The active-site Nucleophile is the cysteine 152. Residue 214 to 215 coordinates substrate; sequence SD. CoA contacts are provided by residues leucine 267, glycine 321, 321–324, and alanine 324; that span reads GGEA.

Belongs to the thiolase-like superfamily. Chalcone/stilbene synthases family. Homodimer.

It carries out the reaction 11 malonyl-CoA + acetyl-CoA + S-adenosyl-L-methionine + 12 NADPH + 22 H(+) = soppiline B + S-adenosyl-L-homocysteine + 12 CO2 + 12 NADP(+) + 12 CoA + 8 H2O. It functions in the pathway secondary metabolite biosynthesis. Its function is as follows. Type III polyketide synthase; part of the gene cluster that mediates the biosynthesis of the alkylresorcinols called soppilines. The biosynthesis starts with the HR-PKS pspA-catalyzed carbon chain assembly through nine chain elongation cycles, using acetyl CoA and malonyl CoA as a starter and extender units, respectively, to produce the polyketide soppiline A. In the first round, the KR, DH, and CMeT domains work to produce 2-methyl-2-butenyl thioester. In rounds 2 to 5, the KR, DH, and ER domains fully catalyze the reduction of the elongated beta-ketothioester, resulting in the insertion of eight methylene units. The unusual Z,E,Z-triene motif is likely constructed during rounds 6 to 8. Typically, the DH domain introduces a double bond at an alpha,beta-position of an elongated polyketide chain, with the dehydration of a beta-hydroxy group. The last extension cycle would be carried out with L-oriented beta-ketoreduction by the KR domain to produce beta-hydroxy carboxylic acid soppiline A. The type III PKS pspB intercepts the elongated polyketide chain at round 8 from the HR-PKS pspA, followed by a tri-keto extension and decarboxylative aldol cyclization to produce 1,3,5-trisubstituted alkylresorcinol soppiline B. Subsequently, the cytochrome P450 monooxygenase pspC catalyzes three-step oxidations at the C-4 methyl group to carboxylic acid to yield soppiline C. This chain is Type III polyketide synthase pspB, found in Penicillium soppii.